Here is a 124-residue protein sequence, read N- to C-terminus: Small ribosomal subunit protein uS12 (124 aa).

Position 89 is a 3-methylthioaspartic acid (aspartate 89). The disordered stretch occupies residues threonine 104–glutamate 124.

Belongs to the universal ribosomal protein uS12 family. As to quaternary structure, part of the 30S ribosomal subunit. Contacts proteins S8 and S17. May interact with IF1 in the 30S initiation complex.

Its function is as follows. With S4 and S5 plays an important role in translational accuracy. In terms of biological role, interacts with and stabilizes bases of the 16S rRNA that are involved in tRNA selection in the A site and with the mRNA backbone. Located at the interface of the 30S and 50S subunits, it traverses the body of the 30S subunit contacting proteins on the other side and probably holding the rRNA structure together. The combined cluster of proteins S8, S12 and S17 appears to hold together the shoulder and platform of the 30S subunit. The chain is Small ribosomal subunit protein uS12 from Synechococcus sp. (strain CC9605).